Reading from the N-terminus, the 339-residue chain is DNA-directed RNA polymerase subunit alpha (339 aa).

An alpha N-terminal domain (alpha-NTD) region spans residues 1–235 (MTIQKNWQEL…DQLNVFVNFE (235 aa)). The interval 251–339 (FNPAFLKKVD…ELAKRFEDHY (89 aa)) is alpha C-terminal domain (alpha-CTD).

The protein belongs to the RNA polymerase alpha chain family. In terms of assembly, homodimer. The RNAP catalytic core consists of 2 alpha, 1 beta, 1 beta' and 1 omega subunit. When a sigma factor is associated with the core the holoenzyme is formed, which can initiate transcription.

The catalysed reaction is RNA(n) + a ribonucleoside 5'-triphosphate = RNA(n+1) + diphosphate. Functionally, DNA-dependent RNA polymerase catalyzes the transcription of DNA into RNA using the four ribonucleoside triphosphates as substrates. The chain is DNA-directed RNA polymerase subunit alpha from Rhodopseudomonas palustris (strain HaA2).